Consider the following 353-residue polypeptide: Photosystem II D2 protein (353 aa).

An N-acetylthreonine modification is found at threonine 2. A Phosphothreonine modification is found at threonine 2. Residues 41-61 traverse the membrane as a helical segment; that stretch reads CAYFAVGGWFTGTTFVTSWYT. Histidine 118 is a binding site for chlorophyll a. The helical transmembrane segment at 125–141 threads the bilayer; it reads GFMLRQFELARSVQLRP. 2 residues coordinate pheophytin a: glutamine 130 and asparagine 143. The chain crosses the membrane as a helical span at residues 153-166; that stretch reads VFVSVFLIYPLGQS. Histidine 198 is a chlorophyll a binding site. A helical membrane pass occupies residues 208 to 228; that stretch reads AALLCAIHGATVENTLFEDGD. A plastoquinone-binding residues include histidine 215 and phenylalanine 262. Histidine 215 serves as a coordination point for Fe cation. Residue histidine 269 participates in Fe cation binding. Residues 279–295 form a helical membrane-spanning segment; that stretch reads GLWMSALGVVGLALNLR.

The protein belongs to the reaction center PufL/M/PsbA/D family. As to quaternary structure, PSII is composed of 1 copy each of membrane proteins PsbA, PsbB, PsbC, PsbD, PsbE, PsbF, PsbH, PsbI, PsbJ, PsbK, PsbL, PsbM, PsbT, PsbX, PsbY, PsbZ, Psb30/Ycf12, at least 3 peripheral proteins of the oxygen-evolving complex and a large number of cofactors. It forms dimeric complexes. Requires The D1/D2 heterodimer binds P680, chlorophylls that are the primary electron donor of PSII, and subsequent electron acceptors. It shares a non-heme iron and each subunit binds pheophytin, quinone, additional chlorophylls, carotenoids and lipids. There is also a Cl(-1) ion associated with D1 and D2, which is required for oxygen evolution. The PSII complex binds additional chlorophylls, carotenoids and specific lipids. as cofactor.

It is found in the plastid. Its subcellular location is the chloroplast thylakoid membrane. It catalyses the reaction 2 a plastoquinone + 4 hnu + 2 H2O = 2 a plastoquinol + O2. Functionally, photosystem II (PSII) is a light-driven water:plastoquinone oxidoreductase that uses light energy to abstract electrons from H(2)O, generating O(2) and a proton gradient subsequently used for ATP formation. It consists of a core antenna complex that captures photons, and an electron transfer chain that converts photonic excitation into a charge separation. The D1/D2 (PsbA/PsbD) reaction center heterodimer binds P680, the primary electron donor of PSII as well as several subsequent electron acceptors. D2 is needed for assembly of a stable PSII complex. The polypeptide is Photosystem II D2 protein (Nicotiana tabacum (Common tobacco)).